A 1048-amino-acid chain; its full sequence is Histone deacetylase complex subunit SAP130 (1048 aa).

Positions 1–95 (MGPPRHPQAG…LQSREEKQEP (95 aa)) are disordered. A compositionally biased stretch (polar residues) spans 40–54 (TGLSQAPSQIANSGS). Basic and acidic residues predominate over residues 67 to 80 (ESGRDSEVSAREHM). Omega-N-methylarginine is present on Arg-232. Thr-355 is subject to Phosphothreonine. Ser-442 and Ser-465 each carry phosphoserine. 3 disordered regions span residues 458–477 (PISGHRASPNPVAMETRSDN), 576–617 (IGTP…PEGK), and 649–687 (QTHSQSASTNAPAQGSSPRPSILRKKPATDGAKPKSEIH). 2 stretches are compositionally biased toward polar residues: residues 590-613 (GIHSATPINTQGLQPAPMGTQQPQ) and 649-667 (QTHSQSASTNAPAQGSSPR). A Glycyl lysine isopeptide (Lys-Gly) (interchain with G-Cter in SUMO2) cross-link involves residue Lys-785. The tract at residues 819 to 871 (LSMPTSDLPPGASPRKKPRKQQHVISTEEGDMMETNSTDDEKSTAKSLLVKAE) is disordered. Residues 836–1047 (PRKQQHVIST…KVSKLKRKEK (212 aa)) form an interactions with SIN3A and HDAC1 region. Ser-855 is subject to Phosphoserine. The residue at position 856 (Thr-856) is a Phosphothreonine. Glycyl lysine isopeptide (Lys-Gly) (interchain with G-Cter in SUMO2) cross-links involve residues Lys-864 and Lys-869. The residue at position 875 (Ser-875) is a Phosphoserine.

Belongs to the SAP130 family. Component of a mSin3A corepressor complex that contains SIN3A, SAP130, SUDS3/SAP45, ARID4B/SAP180, HDAC1 and HDAC2. Interacts (released by dead or dying cells) with CLEC4E. Acetylated. Post-translationally, sumoylated with SUMO1. Expressed in various cancer cell ines.

The protein resides in the nucleus. Its function is as follows. Acts as a transcriptional repressor. May function in the assembly and/or enzymatic activity of the mSin3A corepressor complex or in mediating interactions between the complex and other regulatory complexes. This chain is Histone deacetylase complex subunit SAP130 (SAP130), found in Homo sapiens (Human).